Here is a 468-residue protein sequence, read N- to C-terminus: Proline--tRNA ligase (468 aa).

It belongs to the class-II aminoacyl-tRNA synthetase family. ProS type 3 subfamily. In terms of assembly, homodimer.

The protein resides in the cytoplasm. The enzyme catalyses tRNA(Pro) + L-proline + ATP = L-prolyl-tRNA(Pro) + AMP + diphosphate. In terms of biological role, catalyzes the attachment of proline to tRNA(Pro) in a two-step reaction: proline is first activated by ATP to form Pro-AMP and then transferred to the acceptor end of tRNA(Pro). This is Proline--tRNA ligase from Frankia alni (strain DSM 45986 / CECT 9034 / ACN14a).